A 221-amino-acid chain; its full sequence is Iron-sulfur cluster repair protein YtfE (221 aa).

This sequence belongs to the RIC family. YtfE subfamily. In terms of assembly, homodimer.

It localises to the cytoplasm. In terms of biological role, di-iron-containing protein involved in the repair of iron-sulfur clusters damaged by oxidative and nitrosative stress conditions. The protein is Iron-sulfur cluster repair protein YtfE of Cronobacter sakazakii (strain ATCC BAA-894) (Enterobacter sakazakii).